We begin with the raw amino-acid sequence, 364 residues long: MEKLRVGIVFGGKSAEHEVSLQSAKNIVDAIDKSRFDVVLLGIDKQGQWHVSDASNYLLNADDPAHIALRPSATSLAQVPGKHEHQLIDAQNGQPLPTVDVIFPIVHGTLGEDGSLQGMLRVANLPFVGSDVLASAACMDKDVTKRLLRDAGLNIAPFITLTRANRHNISFAEVESKLGLPLFVKPANQGSSVGVSKVTSEEQYAIAVDLAFEFDHKVIVEQGIKGREIECAVLGNDNPQASTCGEIVLTSDFYAYDTKYIDEDGAKVVVPAAIAPEINDKIRAIAVQAYQTLGCAGMARVDVFLTPENEVVINEINTLPGFTNISMYPKLWQASGLGYTDLITRLIELALERHAADNALKTTM.

Residues 145-348 (KRLLRDAGLN…YTDLITRLIE (204 aa)) form the ATP-grasp domain. 175–230 (ESKLGLPLFVKPANQGSSVGVSKVTSEEQYAIAVDLAFEFDHKVIVEQGIKGREIE) serves as a coordination point for ATP. The Mg(2+) site is built by Asp302, Glu315, and Asn317.

Belongs to the D-alanine--D-alanine ligase family. It depends on Mg(2+) as a cofactor. Mn(2+) serves as cofactor.

It is found in the cytoplasm. It catalyses the reaction 2 D-alanine + ATP = D-alanyl-D-alanine + ADP + phosphate + H(+). It functions in the pathway cell wall biogenesis; peptidoglycan biosynthesis. Cell wall formation. The chain is D-alanine--D-alanine ligase A (ddlA) from Escherichia coli O157:H7.